Consider the following 385-residue polypeptide: Protein GOLM2 (385 aa).

The Cytoplasmic portion of the chain corresponds to 1 to 12 (MVGFGAPRRTGR). The helical; Signal-anchor for type II membrane protein transmembrane segment at 13 to 33 (LPPFVLVALLAVIGLLAFNYW) threads the bilayer. Residues 34–385 (SVSARQAALH…YHKDHLNETL (352 aa)) lie on the Lumenal side of the membrane. Residues 44–193 (DELLGLQAQV…KEELDKQPQK (150 aa)) adopt a coiled-coil conformation. A disordered region spans residues 169-385 (LAERKREYEE…YHKDHLNETL (217 aa)). 2 stretches are compositionally biased toward basic and acidic residues: residues 170–193 (AERK…QPQK) and 211–220 (EVKEKIEDPS). Polar residues predominate over residues 265–283 (LPSQSKSLLEKQPSLQPLS). The segment covering 285–299 (TEHEVKKPLPDKKET) has biased composition (basic and acidic residues). A compositionally biased stretch (acidic residues) spans 356–367 (NGDDGNVEDDDH). The segment covering 368–385 (DGQADAGEYHKDHLNETL) has biased composition (basic and acidic residues).

The protein belongs to the GOLM family.

The protein localises to the membrane. The sequence is that of Protein GOLM2 (golm2) from Xenopus laevis (African clawed frog).